Reading from the N-terminus, the 275-residue chain is Nuclear egress protein 2 (275 aa).

The Perinuclear space segment spans residues 1–251 (MAGLGKPYTG…GLKHLRIGPP (251 aa)). Residues 137–181 (KGRLGLDARPMMASMWISCFVRMPRVQLAFRFMGPEDAGRTRRIL) form an interaction with NEC1 region. Residues 252 to 272 (ALVLAAGLVLGAAIWWVVGAG) form a helical membrane-spanning segment. The Nuclear segment spans residues 273–275 (ARL).

Belongs to the herpesviridae NEC2 protein family. As to quaternary structure, forms a heterohexameric complex with NEC1. Interacts with glycoprotein D; this interaction recruits glycoprotein D and glycoprotein M to the inner nuclear membrane. Phosphorylated by viral kinase US3.

The protein resides in the host nucleus inner membrane. In terms of biological role, plays an essential role in virion nuclear egress, the first step of virion release from infected cell. Within the host nucleus, NEC1 interacts with the newly formed capsid through the vertexes and directs it to the inner nuclear membrane by associating with NEC2. Induces the budding of the capsid at the inner nuclear membrane as well as its envelopment into the perinuclear space. There, the NEC1/NEC2 complex promotes the fusion of the enveloped capsid with the outer nuclear membrane and the subsequent release of the viral capsid into the cytoplasm where it will reach the secondary budding sites in the host Golgi or trans-Golgi network. The polypeptide is Nuclear egress protein 2 (Homo sapiens (Human)).